Here is an 86-residue protein sequence, read N- to C-terminus: Dolichyl-diphosphooligosaccharide--protein glycosyltransferase subunit OST5 (86 aa).

The Lumenal portion of the chain corresponds to 2–27; it reads TYEQLYKEFHSSKSFQPFIHLDTQPK. A helical membrane pass occupies residues 28 to 48; it reads FAICGLIVTLAVLSSALFAVG. The Cytoplasmic segment spans residues 49 to 56; it reads SKSSYIKK. The chain crosses the membrane as a helical span at residues 57–77; it reads LFFYTILSVIGSLFAGLTTVF. Over 78 to 86 the chain is Lumenal; it reads ASNSFGVYV.

Belongs to the OST5 family. In terms of assembly, component of the oligosaccharyltransferase (OST) complex, which appears to exist in two assemblies comprising OST1, OST2, OST4, OST5, STT3, SWP1, WPB1, and either OST3 or OST6. OST assembly occurs through the formation of 3 subcomplexes. Subcomplex 1 contains OST1 and OST5, subcomplex 2 contains STT3, OST3, and OST4, and subcomplex 3 contains OST2, WBP1, and SWP1.

Its subcellular location is the endoplasmic reticulum membrane. The protein operates within protein modification; protein glycosylation. In terms of biological role, subunit of the oligosaccharyl transferase (OST) complex that catalyzes the initial transfer of a defined glycan (Glc(3)Man(9)GlcNAc(2) in eukaryotes) from the lipid carrier dolichol-pyrophosphate to an asparagine residue within an Asn-X-Ser/Thr consensus motif in nascent polypeptide chains, the first step in protein N-glycosylation. N-glycosylation occurs cotranslationally and the complex associates with the Sec61 complex at the channel-forming translocon complex that mediates protein translocation across the endoplasmic reticulum (ER). All subunits are required for a maximal enzyme activity. In Saccharomyces cerevisiae (strain ATCC 204508 / S288c) (Baker's yeast), this protein is Dolichyl-diphosphooligosaccharide--protein glycosyltransferase subunit OST5 (OST5).